The chain runs to 98 residues: LLGLCLITQILTGLFLAMHYTADISTAFSSVAHICRDVNYGWLIRNVHANGASFFFICLYLHVARGMYYGSYLQKETWNIGVVLLLLTMMTAFVGYVL.

3 helical membrane passes run 1–18, 42–63, and 78–98; these read LLGL…FLAM, WLIR…YLHV, and WNIG…GYVL. The heme b site is built by His48 and His62.

This sequence belongs to the cytochrome b family. The cytochrome bc1 complex contains 3 respiratory subunits (MT-CYB, CYC1 and UQCRFS1), 2 core proteins (UQCRC1 and UQCRC2) and probably 6 low-molecular weight proteins. Requires heme b as cofactor.

It is found in the mitochondrion inner membrane. Component of the ubiquinol-cytochrome c reductase complex (complex III or cytochrome b-c1 complex) that is part of the mitochondrial respiratory chain. The b-c1 complex mediates electron transfer from ubiquinol to cytochrome c. Contributes to the generation of a proton gradient across the mitochondrial membrane that is then used for ATP synthesis. The polypeptide is Cytochrome b (mt-cyb) (Scaphirhynchus platorynchus (Shovelnose sturgeon)).